A 498-amino-acid polypeptide reads, in one-letter code: Angiopoietin-4 (498 aa).

The signal sequence occupies residues 1–22 (MPSPPAMLLGGLLLIVASTTVA). The tract at residues 51–80 (EPEPCPPEPEAFGGSNSLQRDSPAATLNLG) is disordered. The stretch at 85-109 (QRMRQLEKMLENNTQWLQKLERYIQ) forms a coiled coil. Asn96, Asn126, Asn158, Asn247, Asn295, Asn306, Asn332, and Asn424 each carry an N-linked (GlcNAc...) asparagine glycan. Positions 186-254 (HELHRLQGHN…SSNSSLLQRQ (69 aa)) form a coiled coil. The Fibrinogen C-terminal domain maps to 277-497 (RAADQLFQDC…TTRMMVRPSG (221 aa)). Cys286 and Cys315 form a disulfide bridge. Cys439 and Cys452 are joined by a disulfide.

Homodimer; disulfide-linked. Interacts with TEK/TIE2.

It localises to the secreted. Functionally, binds to TEK/TIE2, modulating ANGPT1 signaling. Can induce tyrosine phosphorylation of TEK/TIE2. Promotes endothelial cell survival, migration and angiogenesis. The sequence is that of Angiopoietin-4 (ANGPT4) from Bos taurus (Bovine).